Consider the following 37-residue polypeptide: Cytochrome b6-f complex subunit 5 (37 aa).

A helical transmembrane segment spans residues 5–25; that stretch reads LLFGIVLGLIPVTLTGLFVAA.

This sequence belongs to the PetG family. As to quaternary structure, the 4 large subunits of the cytochrome b6-f complex are cytochrome b6, subunit IV (17 kDa polypeptide, PetD), cytochrome f and the Rieske protein, while the 4 small subunits are PetG, PetL, PetM and PetN. The complex functions as a dimer.

It is found in the plastid. The protein resides in the chloroplast thylakoid membrane. In terms of biological role, component of the cytochrome b6-f complex, which mediates electron transfer between photosystem II (PSII) and photosystem I (PSI), cyclic electron flow around PSI, and state transitions. PetG is required for either the stability or assembly of the cytochrome b6-f complex. The protein is Cytochrome b6-f complex subunit 5 of Guillardia theta (Cryptophyte).